A 35-amino-acid chain; its full sequence is GLSRPSKRCIAGGQPCEFHRGYMCCSEHCIIFVCA.

A propeptide spanning residues 1 to 8 (GLSRPSKR) is cleaved from the precursor. Cystine bridges form between cysteine 9–cysteine 25, cysteine 16–cysteine 29, and cysteine 24–cysteine 34.

This sequence belongs to the conotoxin O1 superfamily. As to expression, expressed by the venom duct.

It localises to the secreted. In terms of biological role, probable neurotoxin with unknown target. Possibly targets ion channels. In Californiconus californicus (California cone), this protein is Conotoxin Cal6.1g.